The following is a 136-amino-acid chain: Large ribosomal subunit protein uL16c (136 aa).

It belongs to the universal ribosomal protein uL16 family. As to quaternary structure, part of the 50S ribosomal subunit.

It is found in the plastid. The protein resides in the chloroplast. This Chlamydomonas sp. (strain WXM) protein is Large ribosomal subunit protein uL16c.